The primary structure comprises 441 residues: 3-phosphoshikimate 1-carboxyvinyltransferase (441 aa).

The interval M1 to K24 is disordered. 3 residues coordinate 3-phosphoshikimate: K29, S30, and R34. K29 contributes to the phosphoenolpyruvate binding site. Phosphoenolpyruvate is bound by residues G103 and R132. Residues S177, Q179, D328, and K355 each contribute to the 3-phosphoshikimate site. Q179 lines the phosphoenolpyruvate pocket. The Proton acceptor role is filled by D328. Positions 359 and 401 each coordinate phosphoenolpyruvate.

The protein belongs to the EPSP synthase family. Monomer.

It localises to the cytoplasm. It carries out the reaction 3-phosphoshikimate + phosphoenolpyruvate = 5-O-(1-carboxyvinyl)-3-phosphoshikimate + phosphate. The protein operates within metabolic intermediate biosynthesis; chorismate biosynthesis; chorismate from D-erythrose 4-phosphate and phosphoenolpyruvate: step 6/7. Its function is as follows. Catalyzes the transfer of the enolpyruvyl moiety of phosphoenolpyruvate (PEP) to the 5-hydroxyl of shikimate-3-phosphate (S3P) to produce enolpyruvyl shikimate-3-phosphate and inorganic phosphate. This Synechococcus sp. (strain CC9605) protein is 3-phosphoshikimate 1-carboxyvinyltransferase.